The following is a 340-amino-acid chain: MAVTMYYEEDVEVAALAGKKIAVIGYGSQGHAHAQNLRDSGHDVIIGVRQGKSFDRAKEDGFETFEVGEAVAKADVIMVLAPDELQQSIYEEDIKPNLKSGSALGFAHGFNIHFGYIEVPEDVDVFMVAPKAPGHLVRRTFTEGFGTPALFVSHQNATGHAREIAMDWAKGIGCARVGIIETTFKEETEEDLFGEQAVLCGGLTALVEAGFETLTEARYAGELAYFEVLHEMKLIVDLMYEGGFTKMRQSISNTAEFGDYVTGPRIITDEVKKNMKLVLADIQSGKFAQDFVDDFKAGRPKLTAYREAAKNLEIEKIGAELRKAMPFTQSGDDDAFKIYQ.

Residues Val-3 to Thr-182 enclose the KARI N-terminal Rossmann domain. NADP(+) contacts are provided by residues Tyr-26–Gln-29, Arg-49, Ser-53, and Asp-83–Gln-86. His-108 is a catalytic residue. Gly-134 contacts NADP(+). The KARI C-terminal knotted domain maps to Thr-183–Thr-328. Mg(2+) contacts are provided by Asp-191, Glu-195, Glu-227, and Glu-231. Ser-252 provides a ligand contact to substrate.

This sequence belongs to the ketol-acid reductoisomerase family. Requires Mg(2+) as cofactor.

It carries out the reaction (2R)-2,3-dihydroxy-3-methylbutanoate + NADP(+) = (2S)-2-acetolactate + NADPH + H(+). It catalyses the reaction (2R,3R)-2,3-dihydroxy-3-methylpentanoate + NADP(+) = (S)-2-ethyl-2-hydroxy-3-oxobutanoate + NADPH + H(+). Its pathway is amino-acid biosynthesis; L-isoleucine biosynthesis; L-isoleucine from 2-oxobutanoate: step 2/4. The protein operates within amino-acid biosynthesis; L-valine biosynthesis; L-valine from pyruvate: step 2/4. Functionally, involved in the biosynthesis of branched-chain amino acids (BCAA). Catalyzes an alkyl-migration followed by a ketol-acid reduction of (S)-2-acetolactate (S2AL) to yield (R)-2,3-dihydroxy-isovalerate. In the isomerase reaction, S2AL is rearranged via a Mg-dependent methyl migration to produce 3-hydroxy-3-methyl-2-ketobutyrate (HMKB). In the reductase reaction, this 2-ketoacid undergoes a metal-dependent reduction by NADPH to yield (R)-2,3-dihydroxy-isovalerate. This is Ketol-acid reductoisomerase (NADP(+)) from Lactococcus lactis subsp. cremoris (strain SK11).